A 341-amino-acid polypeptide reads, in one-letter code: DnaJ homolog subfamily C member 22 (341 aa).

Residues K3–W50 form the TM2 domain. 7 helical membrane-spanning segments follow: residues L5–L25, H30–W50, F81–S101, F105–G125, L135–I155, L185–A205, and F218–L238. One can recognise a J domain in the interval L277–R341.

It is found in the membrane. Its function is as follows. May function as a co-chaperone. This is DnaJ homolog subfamily C member 22 (DNAJC22) from Pongo abelii (Sumatran orangutan).